The sequence spans 136 residues: Large ribosomal subunit protein uL16 (136 aa).

This sequence belongs to the universal ribosomal protein uL16 family. Part of the 50S ribosomal subunit.

Its function is as follows. Binds 23S rRNA and is also seen to make contacts with the A and possibly P site tRNAs. This chain is Large ribosomal subunit protein uL16, found in Shewanella denitrificans (strain OS217 / ATCC BAA-1090 / DSM 15013).